The sequence spans 204 residues: Urease accessory protein UreG (204 aa).

Glycine 13–threonine 20 provides a ligand contact to GTP.

This sequence belongs to the SIMIBI class G3E GTPase family. UreG subfamily. Homodimer. UreD, UreF and UreG form a complex that acts as a GTP-hydrolysis-dependent molecular chaperone, activating the urease apoprotein by helping to assemble the nickel containing metallocenter of UreC. The UreE protein probably delivers the nickel.

The protein resides in the cytoplasm. In terms of biological role, facilitates the functional incorporation of the urease nickel metallocenter. This process requires GTP hydrolysis, probably effectuated by UreG. The chain is Urease accessory protein UreG from Acinetobacter baumannii (strain AB307-0294).